Consider the following 605-residue polypeptide: Probable Xaa-Pro aminopeptidase P (605 aa).

The Mn(2+) site is built by D402, D413, E511, and E525.

The protein belongs to the peptidase M24B family. The cofactor is Mn(2+).

It catalyses the reaction Release of any N-terminal amino acid, including proline, that is linked to proline, even from a dipeptide or tripeptide.. In terms of biological role, catalyzes the removal of a penultimate prolyl residue from the N-termini of peptides. The protein is Probable Xaa-Pro aminopeptidase P (AMPP) of Leptosphaeria maculans (strain JN3 / isolate v23.1.3 / race Av1-4-5-6-7-8) (Blackleg fungus).